A 339-amino-acid chain; its full sequence is Phenylalanine--tRNA ligase alpha subunit (339 aa).

A Mg(2+)-binding site is contributed by Glu253.

It belongs to the class-II aminoacyl-tRNA synthetase family. Phe-tRNA synthetase alpha subunit type 1 subfamily. As to quaternary structure, tetramer of two alpha and two beta subunits. The cofactor is Mg(2+).

Its subcellular location is the cytoplasm. The catalysed reaction is tRNA(Phe) + L-phenylalanine + ATP = L-phenylalanyl-tRNA(Phe) + AMP + diphosphate + H(+). The sequence is that of Phenylalanine--tRNA ligase alpha subunit from Alcanivorax borkumensis (strain ATCC 700651 / DSM 11573 / NCIMB 13689 / SK2).